Reading from the N-terminus, the 659-residue chain is MSENIDVQATVTVTFPDGRNMSIPSGSSGYDIAQSIGHSLAREALAIRINGELADLGTAVTDDATVEIITFDHPGATGKHIFWHSASHIMAQAIEELFPGTKFGAGPAVEQGFYYDIASEHRFNEEDLQKIEQQMLDISKRSIDIRREEMPREKAIAFFSESRKDPYKVEILQDTLKEADSVSIYHQGAFADLCSGPHLPNTSKLKAVKLTNISASFWRGDSSRESMQRIYGIAFPSAKLLKQHLARLEEAKKRDHRKLGAELELFMLSQDVGSGLPIWLPKGAIIRSELEAFLKEEQRKRGYVPVYTPHIGNIDLYKRSGHYPYYSDSQFPPLTYKDDLGREEQYLLKPMNCPHHHLIYSSQLRSYRDLPIRMAEFGTVYRHEQSGELNGLIRARGFTQDDSHIYCRPDQLVDEICAAIDLTKFVFTTLGFDDIEVRLSLHDPENQGKYGGTEEVWKQAEKDVREAADRMEINYVIGIGEASFYGPKIDFIVRDALGRKWQLGTVQVDYVMPERFDLSYIGSDGKPHRPVIIHRAPFGSMERFIGVLIEHTAGNFPLWLAPVQVAVLPITEEVHAYAERVHQMLIDNGIRADLDIRSEKIGKKIREAEVGKIPYMVIIGQKEADSEEISLRRHRKGDQGSLTLQALKDMLVKEVRNKS.

In terms of domain architecture, TGS spans 7-70; sequence VQATVTVTFP…TDDATVEIIT (64 aa). Residues 255 to 557 are catalytic; the sequence is DHRKLGAELE…LIEHTAGNFP (303 aa). Positions 353, 404, and 534 each coordinate Zn(2+).

The protein belongs to the class-II aminoacyl-tRNA synthetase family. Homodimer. Zn(2+) serves as cofactor.

It is found in the cytoplasm. The catalysed reaction is tRNA(Thr) + L-threonine + ATP = L-threonyl-tRNA(Thr) + AMP + diphosphate + H(+). In terms of biological role, catalyzes the attachment of threonine to tRNA(Thr) in a two-step reaction: L-threonine is first activated by ATP to form Thr-AMP and then transferred to the acceptor end of tRNA(Thr). Also edits incorrectly charged L-seryl-tRNA(Thr). The chain is Threonine--tRNA ligase from Chlorobium phaeobacteroides (strain BS1).